Consider the following 262-residue polypeptide: MHTRTAPRVRPPSRAAKLAGLLYSLLSYLFFLMTLLYLIGFVGNVGVPKTIDSGPGASWPLALLVDVLLITLFAVQHSVMARKSFKQWWRPVVPAPIERATYVLASSVVLVVMFWLWQPIDLRVWQVESRLGSAVLTTLFWLGWGLILVATFLISHFELFGVKQALDALRPAKPVDGSFRTPLLYKIVRHPMYMGFLMAFWATPEMTVGHLVFALTSTIYILIGTQLEEKDLVEIFGEKYRNYQKNVGMLLPSLRRNPGSQD.

The next 5 helical transmembrane spans lie at 22-42 (LYSL…IGFV), 55-75 (PGAS…LFAV), 100-120 (ATYV…WQPI), 134-154 (AVLT…TFLI), and 195-215 (GFLM…VFAL).

The protein belongs to the nurim family.

Its subcellular location is the membrane. It carries out the reaction methanethiol + S-adenosyl-L-methionine = dimethyl sulfide + S-adenosyl-L-homocysteine + H(+). Functionally, catalyzes the methylation of methanethiol (MeSH) to yield dimethylsulphide (DMS). The sequence is that of Methanethiol S-methyltransferase from Pseudomonas deceptionensis.